The sequence spans 295 residues: Bifunctional protein FolD (295 aa).

NADP(+) contacts are provided by residues 165 to 167, S190, and I231; that span reads GRS.

Belongs to the tetrahydrofolate dehydrogenase/cyclohydrolase family. Homodimer.

The enzyme catalyses (6R)-5,10-methylene-5,6,7,8-tetrahydrofolate + NADP(+) = (6R)-5,10-methenyltetrahydrofolate + NADPH. It catalyses the reaction (6R)-5,10-methenyltetrahydrofolate + H2O = (6R)-10-formyltetrahydrofolate + H(+). The protein operates within one-carbon metabolism; tetrahydrofolate interconversion. Its function is as follows. Catalyzes the oxidation of 5,10-methylenetetrahydrofolate to 5,10-methenyltetrahydrofolate and then the hydrolysis of 5,10-methenyltetrahydrofolate to 10-formyltetrahydrofolate. This is Bifunctional protein FolD from Nitrosomonas eutropha (strain DSM 101675 / C91 / Nm57).